We begin with the raw amino-acid sequence, 132 residues long: Small ribosomal subunit protein uS8 (132 aa).

Belongs to the universal ribosomal protein uS8 family. As to quaternary structure, part of the 30S ribosomal subunit. Contacts proteins S5 and S12.

In terms of biological role, one of the primary rRNA binding proteins, it binds directly to 16S rRNA central domain where it helps coordinate assembly of the platform of the 30S subunit. This is Small ribosomal subunit protein uS8 from Anaeromyxobacter dehalogenans (strain 2CP-1 / ATCC BAA-258).